The primary structure comprises 108 residues: DVVMTQTPASVSEPVGGTVTIKCQASQSIYSNLAWYQZKPGQPPKLLIYKASTLESGVPSRFKGSGSGTDFTLTISDLECADAATYFCQGSBYTGTVFGGGTEVVVKG.

Residues 1–23 (DVVMTQTPASVSEPVGGTVTIKC) form a framework-1 region. Intrachain disulfides connect C23–C88 and C80–G108. A complementarity-determining-1 region spans residues 24–34 (QASQSIYSNLA). The tract at residues 35 to 49 (WYQZKPGQPPKLLIY) is framework-2. The interval 50 to 56 (KASTLES) is complementarity-determining-2. The tract at residues 57 to 88 (GVPSRFKGSGSGTDFTLTISDLECADAATYFC) is framework-3. The complementarity-determining-3 stretch occupies residues 89–97 (QGSBYTGTV). Residues 98-107 (FGGGTEVVVK) form a framework-4 region.

This is Ig kappa chain V region BS-5 from Oryctolagus cuniculus (Rabbit).